The primary structure comprises 324 residues: uncharacterized protein (324 aa).

This is an uncharacterized protein from Methanocaldococcus jannaschii (strain ATCC 43067 / DSM 2661 / JAL-1 / JCM 10045 / NBRC 100440) (Methanococcus jannaschii).